Reading from the N-terminus, the 154-residue chain is Ribonuclease H (154 aa).

Positions 1-142 (MLKQVEIFTD…CDELARRAAG (142 aa)) constitute an RNase H type-1 domain. Positions 10, 48, 70, and 134 each coordinate Mg(2+).

This sequence belongs to the RNase H family. As to quaternary structure, monomer. Requires Mg(2+) as cofactor.

It is found in the cytoplasm. It carries out the reaction Endonucleolytic cleavage to 5'-phosphomonoester.. Its function is as follows. Endonuclease that specifically degrades the RNA of RNA-DNA hybrids. The sequence is that of Ribonuclease H from Edwardsiella ictaluri (strain 93-146).